The chain runs to 163 residues: 3-isopropylmalate dehydratase small subunit (163 aa).

The protein belongs to the LeuD family. LeuD type 2 subfamily. Heterodimer of LeuC and LeuD.

It catalyses the reaction (2R,3S)-3-isopropylmalate = (2S)-2-isopropylmalate. It functions in the pathway amino-acid biosynthesis; L-leucine biosynthesis; L-leucine from 3-methyl-2-oxobutanoate: step 2/4. Functionally, catalyzes the isomerization between 2-isopropylmalate and 3-isopropylmalate, via the formation of 2-isopropylmaleate. The chain is 3-isopropylmalate dehydratase small subunit from Clostridioides difficile (strain 630) (Peptoclostridium difficile).